The following is a 212-amino-acid chain: Ion-translocating oxidoreductase complex subunit G (212 aa).

Residues 9-29 form a helical membrane-spanning segment; it reads ASLLGLFALLCTALVALVNQF. An FMN phosphoryl threonine modification is found at threonine 176.

This sequence belongs to the RnfG family. As to quaternary structure, the complex is composed of six subunits: RnfA, RnfB, RnfC, RnfD, RnfE and RnfG. FMN serves as cofactor.

The protein localises to the cell inner membrane. In terms of biological role, part of a membrane-bound complex that couples electron transfer with translocation of ions across the membrane. In Shewanella loihica (strain ATCC BAA-1088 / PV-4), this protein is Ion-translocating oxidoreductase complex subunit G.